A 295-amino-acid polypeptide reads, in one-letter code: Iron-sulfur cluster carrier protein (295 aa).

An ATP-binding site is contributed by 38-45 (GKGGVGKS).

This sequence belongs to the Mrp/NBP35 ATP-binding proteins family. As to quaternary structure, homodimer.

Its function is as follows. Binds and transfers iron-sulfur (Fe-S) clusters to target apoproteins. Can hydrolyze ATP. This Pyrococcus furiosus (strain ATCC 43587 / DSM 3638 / JCM 8422 / Vc1) protein is Iron-sulfur cluster carrier protein.